The primary structure comprises 188 residues: dCTP deaminase (188 aa).

DCTP contacts are provided by residues 111 to 116 (KSTYAR), 135 to 137 (TLE), glutamine 156, tyrosine 170, and glutamine 180. Glutamate 137 (proton donor/acceptor) is an active-site residue.

It belongs to the dCTP deaminase family. As to quaternary structure, homotrimer.

The catalysed reaction is dCTP + H2O + H(+) = dUTP + NH4(+). It functions in the pathway pyrimidine metabolism; dUMP biosynthesis; dUMP from dCTP (dUTP route): step 1/2. Catalyzes the deamination of dCTP to dUTP. This Azoarcus sp. (strain BH72) protein is dCTP deaminase.